The chain runs to 322 residues: Homoserine kinase (322 aa).

107 to 117 (PLSSGMGGSAA) is a binding site for ATP.

This sequence belongs to the GHMP kinase family. Homoserine kinase subfamily.

The protein resides in the cytoplasm. The enzyme catalyses L-homoserine + ATP = O-phospho-L-homoserine + ADP + H(+). Its pathway is amino-acid biosynthesis; L-threonine biosynthesis; L-threonine from L-aspartate: step 4/5. Its function is as follows. Catalyzes the ATP-dependent phosphorylation of L-homoserine to L-homoserine phosphate. In Xylella fastidiosa (strain 9a5c), this protein is Homoserine kinase.